We begin with the raw amino-acid sequence, 132 residues long: Holo-[acyl-carrier-protein] synthase (132 aa).

2 residues coordinate Mg(2+): Asp-13 and Glu-63.

The protein belongs to the P-Pant transferase superfamily. AcpS family. Mg(2+) serves as cofactor.

It localises to the cytoplasm. It catalyses the reaction apo-[ACP] + CoA = holo-[ACP] + adenosine 3',5'-bisphosphate + H(+). Transfers the 4'-phosphopantetheine moiety from coenzyme A to a Ser of acyl-carrier-protein. This chain is Holo-[acyl-carrier-protein] synthase, found in Gloeobacter violaceus (strain ATCC 29082 / PCC 7421).